The primary structure comprises 408 residues: Hepatocyte nuclear factor 4-gamma (408 aa).

Positions 9-84 (NCLCAICGDR…AGMKKEAVQN (76 aa)) form a DNA-binding region, nuclear receptor. 2 NR C4-type zinc fingers span residues 12 to 32 (CAIC…CDGC) and 48 to 72 (CRFS…LRKC). S94 bears the Phosphoserine mark. The NR LBD domain maps to 99–328 (SNIPSINTLA…NLLQEMLLGG (230 aa)). Residues 368 to 390 (ISTPETPLPSPPQGSGQEQYKIA) are disordered. Phosphothreonine occurs at positions 370 and 373. Position 377 is a phosphoserine (S377).

It belongs to the nuclear hormone receptor family. NR2 subfamily. In terms of tissue distribution, expressed in pancreas, kidney, small intestine and testis. Weakly expressed in colon. Not expressed in liver, skeletal muscle, lung, placenta, brain, heart, peripheral blood, ovary, prostate, thymus and spleen.

It is found in the nucleus. Transcription factor. Has a lower transcription activation potential than HNF4-alpha. The protein is Hepatocyte nuclear factor 4-gamma (HNF4G) of Homo sapiens (Human).